A 228-amino-acid polypeptide reads, in one-letter code: NAD(P)H-quinone oxidoreductase subunit K, chloroplastic (228 aa).

Cysteine 43, cysteine 44, cysteine 108, and cysteine 139 together coordinate [4Fe-4S] cluster.

Belongs to the complex I 20 kDa subunit family. In terms of assembly, NDH is composed of at least 16 different subunits, 5 of which are encoded in the nucleus. [4Fe-4S] cluster is required as a cofactor.

Its subcellular location is the plastid. The protein localises to the chloroplast thylakoid membrane. The catalysed reaction is a plastoquinone + NADH + (n+1) H(+)(in) = a plastoquinol + NAD(+) + n H(+)(out). It catalyses the reaction a plastoquinone + NADPH + (n+1) H(+)(in) = a plastoquinol + NADP(+) + n H(+)(out). In terms of biological role, NDH shuttles electrons from NAD(P)H:plastoquinone, via FMN and iron-sulfur (Fe-S) centers, to quinones in the photosynthetic chain and possibly in a chloroplast respiratory chain. The immediate electron acceptor for the enzyme in this species is believed to be plastoquinone. Couples the redox reaction to proton translocation, and thus conserves the redox energy in a proton gradient. This chain is NAD(P)H-quinone oxidoreductase subunit K, chloroplastic, found in Ceratophyllum demersum (Rigid hornwort).